We begin with the raw amino-acid sequence, 214 residues long: Pyrrolidone-carboxylate peptidase (214 aa).

Residues Glu-78, Cys-141, and His-165 contribute to the active site.

It belongs to the peptidase C15 family. Homotetramer.

The protein resides in the cytoplasm. The catalysed reaction is Release of an N-terminal pyroglutamyl group from a polypeptide, the second amino acid generally not being Pro.. Functionally, removes 5-oxoproline from various penultimate amino acid residues except L-proline. This chain is Pyrrolidone-carboxylate peptidase, found in Streptococcus pneumoniae serotype 2 (strain D39 / NCTC 7466).